Consider the following 447-residue polypeptide: Dirigent protein 10 (447 aa).

The signal sequence occupies residues 1–21 (MAGQKILSLLVIALVVTFAAA). Over residues 74-85 (SGSTGSGLGAGT) the composition is skewed to gly residues. The segment at 74–123 (SGSTGSGLGAGTGSIPSSGSGPGLLPTASSVPGSLAGGGSGSLPTTGSAT) is disordered. Low complexity predominate over residues 86–107 (GSIPSSGSGPGLLPTASSVPGS).

This sequence belongs to the plant dirigent protein family. Homodimer. In terms of tissue distribution, in roots, mostly detected in root endodermis and quiescent center, and, to a lower extent, in root stele and cortex. Expressed in root vascular cylinder, flowers, siliques, cotyledon and leaf veins, and leaf margins. Present in the basal region of rosette leaf trichomes and in developing xylem.

It localises to the secreted. The protein localises to the extracellular space. Its subcellular location is the apoplast. Its function is as follows. Dirigent proteins impart stereoselectivity on the phenoxy radical-coupling reaction, yielding optically active lignans from two molecules of coniferyl alcohol in the biosynthesis of lignans, flavonolignans, and alkaloids and thus plays a central role in plant secondary metabolism. Regulates suberin accumulation in roots. The chain is Dirigent protein 10 (DIR10) from Arabidopsis thaliana (Mouse-ear cress).